The sequence spans 238 residues: Ribonuclease PH (238 aa).

Phosphate-binding positions include Arg-86 and 124-126 (GTR).

It belongs to the RNase PH family. As to quaternary structure, homohexameric ring arranged as a trimer of dimers.

It carries out the reaction tRNA(n+1) + phosphate = tRNA(n) + a ribonucleoside 5'-diphosphate. Its function is as follows. Phosphorolytic 3'-5' exoribonuclease that plays an important role in tRNA 3'-end maturation. Removes nucleotide residues following the 3'-CCA terminus of tRNAs; can also add nucleotides to the ends of RNA molecules by using nucleoside diphosphates as substrates, but this may not be physiologically important. Probably plays a role in initiation of 16S rRNA degradation (leading to ribosome degradation) during starvation. This chain is Ribonuclease PH, found in Shigella boydii serotype 18 (strain CDC 3083-94 / BS512).